Here is a 66-residue protein sequence, read N- to C-terminus: MAKGKDARVTIILECTSCLRNRVNKESRGISRYITQKNRHNTPSRLELRKFCPSCYKHTIHGELKK.

It belongs to the bacterial ribosomal protein bL33 family.

It is found in the plastid. Its subcellular location is the chloroplast. This is Large ribosomal subunit protein bL33c from Morus indica (Mulberry).